Reading from the N-terminus, the 555-residue chain is Protein PLASTID TRANSCRIPTIONALLY ACTIVE 12, chloroplastic (555 aa).

The N-terminal 58 residues, 1–58, are a transit peptide targeting the chloroplast; the sequence is MASCYNPWRLFPGMSTAVPAGPVTAPAHSRTCKSSKVFSALPHRRGLLFLGTRRARIK. Disordered regions lie at residues 80–100, 115–167, and 468–541; these read YFDS…SIPG, ARAP…EPDV, and SYNE…IDDS. Residues 144 to 154 show a composition bias toward polar residues; sequence QVTSASGTEGA. Acidic residues-rich tracts occupy residues 471 to 480 and 490 to 502; these read EDSDDEDEDV and LEDE…DVAE. The segment covering 508–519 has biased composition (polar residues); it reads NQNWSALKSTGQ. The segment covering 521 to 538 has biased composition (basic and acidic residues); the sequence is EKPKEKSKKDEMTLKEAI.

Component of the plastid-encoded plastid RNA polymerase (PEP) complex.

Its subcellular location is the plastid. The protein localises to the chloroplast stroma. It localises to the nucleus. Its function is as follows. Required for the activity of the plastid-encoded RNA polymerase (PEP) and full expression of genes transcribed by PEP. Required for the proper build-up and formation of the PEP-complex. Binds single-stranded (ss) DNA and RNA, but not double-stranded (ds) DNA. In Zea mays (Maize), this protein is Protein PLASTID TRANSCRIPTIONALLY ACTIVE 12, chloroplastic.